Consider the following 143-residue polypeptide: Mini-ribonuclease 3 (143 aa).

Asp-23 is an active-site residue.

This sequence belongs to the MrnC RNase family. As to quaternary structure, homodimer. Requires Mg(2+) as cofactor.

Its subcellular location is the cytoplasm. Involved in correct processing of both the 5' and 3' ends of 23S rRNA precursor. Processes 30S rRNA precursor transcript even in absence of ribonuclease 3 (Rnc); Rnc processes 30S rRNA into smaller rRNA precursors. Cleaves more efficiently on assembled 50S ribosomal subunits. Cleavage is strongly stimulated by ribosomal protein L3 (RplC); 20-30% DMSO can replace RplC, suggesting RplC may alter rRNA conformation. The sequence is that of Mini-ribonuclease 3 (mrnC) from Bacillus subtilis (strain 168).